The chain runs to 424 residues: CinA-like protein (424 aa).

It belongs to the CinA family.

The chain is CinA-like protein from Prochlorococcus marinus (strain MIT 9312).